We begin with the raw amino-acid sequence, 331 residues long: 6-phosphogluconolactonase (331 aa).

Lys-287 is subject to N6-acetyllysine.

This sequence belongs to the cycloisomerase 2 family.

It carries out the reaction 6-phospho-D-glucono-1,5-lactone + H2O = 6-phospho-D-gluconate + H(+). It functions in the pathway carbohydrate degradation; pentose phosphate pathway; D-ribulose 5-phosphate from D-glucose 6-phosphate (oxidative stage): step 2/3. Functionally, catalyzes the hydrolysis of 6-phosphogluconolactone to 6-phosphogluconate. The sequence is that of 6-phosphogluconolactonase from Escherichia coli O6:K15:H31 (strain 536 / UPEC).